We begin with the raw amino-acid sequence, 507 residues long: Protein disulfide-isomerase (507 aa).

The signal sequence occupies residues 1 to 20 (MASMVSFCFLLLFLAFFASS). Residues 21–144 (FNEIYAEESE…IVDYLKKQSG (124 aa)) form the Thioredoxin 1 domain. Catalysis depends on nucleophile residues cysteine 62 and cysteine 65. Cysteine 62 and cysteine 65 are joined by a disulfide. Residues asparagine 181 and asparagine 278 are each glycosylated (N-linked (GlcNAc...) asparagine). The 121-residue stretch at 365-485 (YRKSEPIPEH…FIEFIEKNRE (121 aa)) folds into the Thioredoxin 2 domain. Active-site nucleophile residues include cysteine 407 and cysteine 410. Cysteine 407 and cysteine 410 are joined by a disulfide. Residues 484-507 (REKSSKKESIVKDDQTDSETKAEL) are disordered. Residues 504–507 (KAEL) carry the Prevents secretion from ER motif.

Belongs to the protein disulfide isomerase family.

It is found in the endoplasmic reticulum lumen. It carries out the reaction Catalyzes the rearrangement of -S-S- bonds in proteins.. Its function is as follows. Participates in the folding of proteins containing disulfide bonds, may be involved in glycosylation, prolyl hydroxylation and triglyceride transfer. The chain is Protein disulfide-isomerase (PDI) from Datisca glomerata (Durango root).